Reading from the N-terminus, the 426-residue chain is Glutamate-1-semialdehyde 2,1-aminomutase (426 aa).

Lysine 265 bears the N6-(pyridoxal phosphate)lysine mark.

This sequence belongs to the class-III pyridoxal-phosphate-dependent aminotransferase family. HemL subfamily. As to quaternary structure, homodimer. The cofactor is pyridoxal 5'-phosphate.

It localises to the cytoplasm. It carries out the reaction (S)-4-amino-5-oxopentanoate = 5-aminolevulinate. It functions in the pathway porphyrin-containing compound metabolism; protoporphyrin-IX biosynthesis; 5-aminolevulinate from L-glutamyl-tRNA(Glu): step 2/2. The polypeptide is Glutamate-1-semialdehyde 2,1-aminomutase (Salmonella schwarzengrund (strain CVM19633)).